We begin with the raw amino-acid sequence, 574 residues long: MRWSNFYIPTLKEAPADAEVVSHKLLIRAGMIRKLTSGIYIYLPLGLRSIEKAASIVRQEMNSAGAQELLMPMVQPADLWQESGRWDFYGKELLRISDRHGRDYCLGPTHEEVITDLVRGEVRSYRQLPLNLYQIQTKFRDEIRPRFGLMRGREFMMKDAYSFDRDAQGLDLSYRAMYEAYMKIFSRMGLKFRAVEADSGSIGGSFSHEFMVLAETGEDTIAFCHDCDYSANVERAEVVCTLDECDAPVAGVEEVHTPDRHTVEEVCEFMNVPAAALIKTLLYVADGEPVAALVRGDRELNEAKLKNLLRADTLELASPEQVREWTGAPVGFAGPVGLGVKRLFADNELRLATDWITGANKADTHLRHVSLKRDTRLSGYADLRMITDKDPCPRCSGTLELTRGIEVGHVFKLGTKYSEAMGCKFLDENGKEQVMLMGCYGIGVSRVVAACIEQNSDENGIVFPPPIAPFEVLLLNLDGKNDDVNARVDELYGAVQAAGCDVLMDDRNERPGVKFKDADLIGVPMQLVVGGKGLARGIVEAKDRRTGEKTELPVDGFAQAFAAWRRQVLQGWGL.

Belongs to the class-II aminoacyl-tRNA synthetase family. ProS type 1 subfamily. In terms of assembly, homodimer.

The protein resides in the cytoplasm. It carries out the reaction tRNA(Pro) + L-proline + ATP = L-prolyl-tRNA(Pro) + AMP + diphosphate. Catalyzes the attachment of proline to tRNA(Pro) in a two-step reaction: proline is first activated by ATP to form Pro-AMP and then transferred to the acceptor end of tRNA(Pro). As ProRS can inadvertently accommodate and process non-cognate amino acids such as alanine and cysteine, to avoid such errors it has two additional distinct editing activities against alanine. One activity is designated as 'pretransfer' editing and involves the tRNA(Pro)-independent hydrolysis of activated Ala-AMP. The other activity is designated 'posttransfer' editing and involves deacylation of mischarged Ala-tRNA(Pro). The misacylated Cys-tRNA(Pro) is not edited by ProRS. This is Proline--tRNA ligase from Oleidesulfovibrio alaskensis (strain ATCC BAA-1058 / DSM 17464 / G20) (Desulfovibrio alaskensis).